The primary structure comprises 393 residues: Formate-dependent phosphoribosylglycinamide formyltransferase (393 aa).

Residues 22-23 (EL) and Glu82 contribute to the N(1)-(5-phospho-beta-D-ribosyl)glycinamide site. Residues Arg114, Lys155, 160–165 (SSGKGQ), 195–198 (EGFI), and Glu203 contribute to the ATP site. The ATP-grasp domain occupies 119-308 (RLAAEELGLP…EFALHARAIL (190 aa)). Mg(2+) contacts are provided by Glu267 and Glu279. Residues Asp286, Lys356, and 363–364 (RR) each bind N(1)-(5-phospho-beta-D-ribosyl)glycinamide.

It belongs to the PurK/PurT family. As to quaternary structure, homodimer.

The enzyme catalyses N(1)-(5-phospho-beta-D-ribosyl)glycinamide + formate + ATP = N(2)-formyl-N(1)-(5-phospho-beta-D-ribosyl)glycinamide + ADP + phosphate + H(+). It participates in purine metabolism; IMP biosynthesis via de novo pathway; N(2)-formyl-N(1)-(5-phospho-D-ribosyl)glycinamide from N(1)-(5-phospho-D-ribosyl)glycinamide (formate route): step 1/1. Its function is as follows. Involved in the de novo purine biosynthesis. Catalyzes the transfer of formate to 5-phospho-ribosyl-glycinamide (GAR), producing 5-phospho-ribosyl-N-formylglycinamide (FGAR). Formate is provided by PurU via hydrolysis of 10-formyl-tetrahydrofolate. The protein is Formate-dependent phosphoribosylglycinamide formyltransferase of Azoarcus sp. (strain BH72).